We begin with the raw amino-acid sequence, 64 residues long: Conotoxin Leo-T1 (64 aa).

A signal peptide spans 1–22 (MRCLPVFIILLLLIPSAPSVDA). Positions 23–48 (QPKTEDDVPLASLHDNAKLTLQGLWD) are excised as a propeptide.

Belongs to the conotoxin T superfamily. Post-translationally, contains 2 disulfide bonds that can be either 'C1-C3, C2-C4' or 'C1-C4, C2-C3', since these disulfide connectivities have been observed for conotoxins with cysteine framework V (for examples, see AC P0DQQ7 and AC P81755). In terms of tissue distribution, expressed by the venom duct.

It localises to the secreted. This chain is Conotoxin Leo-T1, found in Conus leopardus (Leopard cone).